The following is a 192-amino-acid chain: tRNA (cytidine(56)-2'-O)-methyltransferase (192 aa).

S-adenosyl-L-methionine is bound by residues Leu84 and 112 to 116; that span reads GGEKV.

The protein belongs to the aTrm56 family. Homodimer.

The protein resides in the cytoplasm. The catalysed reaction is cytidine(56) in tRNA + S-adenosyl-L-methionine = 2'-O-methylcytidine(56) in tRNA + S-adenosyl-L-homocysteine + H(+). Specifically catalyzes the AdoMet-dependent 2'-O-ribose methylation of cytidine at position 56 in tRNAs. In Halobacterium salinarum (strain ATCC 700922 / JCM 11081 / NRC-1) (Halobacterium halobium), this protein is tRNA (cytidine(56)-2'-O)-methyltransferase.